Reading from the N-terminus, the 249-residue chain is Zinc import ATP-binding protein ZnuC (249 aa).

One can recognise an ABC transporter domain in the interval 1-219; it reads MRLVSLRNAT…PEYQALFGSG (219 aa). 36-43 is a binding site for ATP; sequence GPNGSGKS.

It belongs to the ABC transporter superfamily. Zinc importer (TC 3.A.1.15.5) family. The complex is composed of two ATP-binding proteins (ZnuC), two transmembrane proteins (ZnuB) and a solute-binding protein (ZnuA).

The protein localises to the cell inner membrane. The enzyme catalyses Zn(2+)(out) + ATP(in) + H2O(in) = Zn(2+)(in) + ADP(in) + phosphate(in) + H(+)(in). In terms of biological role, part of the ABC transporter complex ZnuABC involved in zinc import. Responsible for energy coupling to the transport system. In Ruegeria sp. (strain TM1040) (Silicibacter sp.), this protein is Zinc import ATP-binding protein ZnuC.